The following is a 240-amino-acid chain: uncharacterized protein (240 aa).

A helical membrane pass occupies residues 73-93; sequence LLGCLYFFIYFVAPTLGPVLF.

This sequence belongs to the universal ribosomal protein uS3 family.

It is found in the mitochondrion membrane. This is an uncharacterized protein from Arabidopsis thaliana (Mouse-ear cress).